The primary structure comprises 687 residues: Glycine--tRNA ligase beta subunit (687 aa).

This sequence belongs to the class-II aminoacyl-tRNA synthetase family. Tetramer of two alpha and two beta subunits.

Its subcellular location is the cytoplasm. It catalyses the reaction tRNA(Gly) + glycine + ATP = glycyl-tRNA(Gly) + AMP + diphosphate. The sequence is that of Glycine--tRNA ligase beta subunit from Geobacter sulfurreducens (strain ATCC 51573 / DSM 12127 / PCA).